The chain runs to 87 residues: Potassium channel toxin Tdi-beta-KTx (87 aa).

An N-terminal signal peptide occupies residues 1–19 (MERKLALLLLLGMITLASS). Positions 20–27 (GLREKHVQ) are excised as a propeptide. Residues 53–87 (QFGCPAYEGYCMNHCQDIERHDGSCHGFKCKCEKS) enclose the BetaSPN-type CS-alpha/beta domain. Cystine bridges form between C56–C77, C63–C82, and C67–C84.

As to expression, expressed by the venom gland.

It localises to the secreted. In terms of biological role, inhibits voltage-gated potassium channel. The polypeptide is Potassium channel toxin Tdi-beta-KTx (Tityus discrepans (Venezuelan scorpion)).